Reading from the N-terminus, the 86-residue chain is Small nuclear ribonucleoprotein F (86 aa).

N-acetylserine is present on Ser2. The 73-residue stretch at 6-78 (NPKPFLNGLT…VLYIRGVEEE (73 aa)) folds into the Sm domain.

The protein belongs to the snRNP Sm proteins family. SmF/LSm6 subfamily. As to quaternary structure, core component of the spliceosomal U1, U2, U4 and U5 small nuclear ribonucleoproteins (snRNPs), the building blocks of the spliceosome. Most spliceosomal snRNPs contain a common set of Sm proteins, SNRPB, SNRPD1, SNRPD2, SNRPD3, SNRPE, SNRPF and SNRPG that assemble in a heptameric protein ring on the Sm site of the small nuclear RNA to form the core snRNP. Component of the U1 snRNP. The U1 snRNP is composed of the U1 snRNA and the 7 core Sm proteins SNRPB, SNRPD1, SNRPD2, SNRPD3, SNRPE, SNRPF and SNRPG, and at least three U1 snRNP-specific proteins SNRNP70/U1-70K, SNRPA/U1-A and SNRPC/U1-C. Component of the U4/U6-U5 tri-snRNP complex composed of the U4, U6 and U5 snRNAs and at least PRPF3, PRPF4, PRPF6, PRPF8, PRPF31, SNRNP200, TXNL4A, SNRNP40, SNRPB, SNRPD1, SNRPD2, SNRPD3, SNRPE, SNRPF, SNRPG, DDX23, CD2BP2, PPIH, SNU13, EFTUD2, SART1 and USP39, plus LSM2, LSM3, LSM4, LSM5, LSM6, LSM7 and LSM8. Component of the U7 snRNP complex, or U7 Sm protein core complex, that is composed of the U7 snRNA and at least LSM10, LSM11, SNRPB, SNRPD3, SNRPE, SNRPF and SNRPG; the complex does not contain SNRPD1 and SNRPD2. Component of the minor spliceosome, which splices U12-type introns. Part of the SMN-Sm complex that contains SMN1, GEMIN2/SIP1, DDX20/GEMIN3, GEMIN4, GEMIN5, GEMIN6, GEMIN7, GEMIN8, STRAP/UNRIP and the Sm proteins SNRPB, SNRPD1, SNRPD2, SNRPD3, SNRPE, SNRPF and SNRPG; catalyzes core snRNPs assembly. Forms a 6S pICln-Sm complex composed of CLNS1A/pICln, SNRPD1, SNRPD2, SNRPE, SNRPF and SNRPG; ring-like structure where CLNS1A/pICln mimics additional Sm proteins and which is unable to assemble into the core snRNP. Interacts with GEMIN2 (via N-terminus); the interaction is direct. Interacts with SNRPD2; the interaction is direct. Interacts with SNRPE; the interaction is direct.

The protein resides in the cytoplasm. The protein localises to the cytosol. It is found in the nucleus. In terms of biological role, plays a role in pre-mRNA splicing as a core component of the spliceosomal U1, U2, U4 and U5 small nuclear ribonucleoproteins (snRNPs), the building blocks of the spliceosome. Component of both the pre-catalytic spliceosome B complex and activated spliceosome C complexes. As a component of the minor spliceosome, involved in the splicing of U12-type introns in pre-mRNAs. As part of the U7 snRNP it is involved in histone 3'-end processing. This is Small nuclear ribonucleoprotein F (SNRPF) from Homo sapiens (Human).